A 253-amino-acid chain; its full sequence is MRILLSNDDGVHAPGIQTLAKALREFADVQVVAPDRNRSGASNSLTLESSLRTFTFDNGDIAVQMGTPTDCVYLGVNALMRPRPDIVVSGINAGPNLGDDVIYSGTVAAAMEGRHLGFPALAVSLDGHQHYETAAAVTCSILRALRREPLRTGRILNINVPDLPLDQIKGIRVTRCGSRHPADQVIPQQDPRGNTLYWIGPPGGKCDAGPDTDFAAVDEGYVSVTPLHVDLTAYSAHDVVSDWLDSVGVDAQW.

Residues aspartate 8, aspartate 9, serine 39, and asparagine 92 each coordinate a divalent metal cation.

The protein belongs to the SurE nucleotidase family. The cofactor is a divalent metal cation.

Its subcellular location is the cytoplasm. The enzyme catalyses a ribonucleoside 5'-phosphate + H2O = a ribonucleoside + phosphate. The catalysed reaction is a ribonucleoside 3'-phosphate + H2O = a ribonucleoside + phosphate. It carries out the reaction [phosphate](n) + H2O = [phosphate](n-1) + phosphate + H(+). In terms of biological role, nucleotidase with a broad substrate specificity as it can dephosphorylate various ribo- and deoxyribonucleoside 5'-monophosphates and ribonucleoside 3'-monophosphates with highest affinity to 3'-AMP. Also hydrolyzes polyphosphate (exopolyphosphatase activity) with the preference for short-chain-length substrates (P20-25). Might be involved in the regulation of dNTP and NTP pools, and in the turnover of 3'-mononucleotides produced by numerous intracellular RNases (T1, T2, and F) during the degradation of various RNAs. The polypeptide is 5'/3'-nucleotidase SurE (Citrobacter koseri (strain ATCC BAA-895 / CDC 4225-83 / SGSC4696)).